The chain runs to 440 residues: UPF0761 membrane protein Rru_A2625 (440 aa).

Helical transmembrane passes span 29–49, 61–81, 117–137, 157–177, 201–221, 224–244, and 264–284; these read ILATAGSFTILVLRALITHDI, LLALVPLIAIALAILAAFPGF, GLTALGVAGLTLTAIILLLTI, LLVYWSVLTGGPLLMGLSFSL, PTLGPPLLSLTAMTLLYMLVP, PVPLFHALAGALVATLASALL, and ALAALPAFLVWMYLSWAVVLM.

The protein belongs to the UPF0761 family.

It localises to the cell inner membrane. This is UPF0761 membrane protein Rru_A2625 from Rhodospirillum rubrum (strain ATCC 11170 / ATH 1.1.1 / DSM 467 / LMG 4362 / NCIMB 8255 / S1).